We begin with the raw amino-acid sequence, 127 residues long: Calcitonin receptor-stimulating peptide 2 (127 aa).

The first 25 residues, 1-25 (MGFWKLSPFLAIGLLVMYQAGILQA), serve as a signal peptide directing secretion. Positions 26-81 (APFRSALENPLESATLTEDEICVLLTAVVKDYVQMKARELQQEQETEGSSLTAQKS) are excised as a propeptide. Residues 65 to 85 (LQQEQETEGSSLTAQKSSCKD) form a disordered region. Residues 72-81 (EGSSLTAQKS) are compositionally biased toward polar residues. Cys-83 and Cys-88 are disulfide-bonded.

This sequence belongs to the calcitonin family.

Its subcellular location is the secreted. This Canis lupus familiaris (Dog) protein is Calcitonin receptor-stimulating peptide 2 (CRSP2).